We begin with the raw amino-acid sequence, 142 residues long: Large ribosomal subunit protein uL13 (142 aa).

The protein belongs to the universal ribosomal protein uL13 family. Part of the 50S ribosomal subunit.

In terms of biological role, this protein is one of the early assembly proteins of the 50S ribosomal subunit, although it is not seen to bind rRNA by itself. It is important during the early stages of 50S assembly. This Marinomonas sp. (strain MWYL1) protein is Large ribosomal subunit protein uL13.